A 335-amino-acid chain; its full sequence is Glyceraldehyde-3-phosphate dehydrogenase (335 aa).

Residues 11–12 (TI) and G110 contribute to the NAD(+) site. 139 to 141 (SCN) lines the D-glyceraldehyde 3-phosphate pocket. Catalysis depends on C140, which acts as the Nucleophile. R168 is a binding site for NAD(+). 194 to 195 (HG) is a binding site for D-glyceraldehyde 3-phosphate. NAD(+) is bound at residue Q301.

It belongs to the glyceraldehyde-3-phosphate dehydrogenase family. As to quaternary structure, homotetramer.

Its subcellular location is the cytoplasm. The catalysed reaction is D-glyceraldehyde 3-phosphate + phosphate + NADP(+) = (2R)-3-phospho-glyceroyl phosphate + NADPH + H(+). It catalyses the reaction D-glyceraldehyde 3-phosphate + phosphate + NAD(+) = (2R)-3-phospho-glyceroyl phosphate + NADH + H(+). The protein operates within carbohydrate degradation; glycolysis; pyruvate from D-glyceraldehyde 3-phosphate: step 1/5. The polypeptide is Glyceraldehyde-3-phosphate dehydrogenase (Halobacterium salinarum (strain ATCC 29341 / DSM 671 / R1)).